Reading from the N-terminus, the 311-residue chain is Malate dehydrogenase (311 aa).

NAD(+)-binding positions include 7 to 12 (GAGNVG) and D32. R82 and R88 together coordinate substrate. Residues N95 and 118 to 120 (VSN) each bind NAD(+). Positions 120 and 151 each coordinate substrate. H175 acts as the Proton acceptor in catalysis.

This sequence belongs to the LDH/MDH superfamily. MDH type 3 family. In terms of assembly, homotetramer.

It catalyses the reaction (S)-malate + NAD(+) = oxaloacetate + NADH + H(+). Strongly inhibited by iodoacetic acid and CuCl(2). Completely inhibited by N-ethylmaleimide and HgCl(2). In terms of biological role, catalyzes the reversible oxidation of malate to oxaloacetate. Can use both NAD and NADP for malate oxidation, but NADPH cannot be used for oxaloacetate reduction. The polypeptide is Malate dehydrogenase (Flavobacterium frigidimaris).